The following is an 80-amino-acid chain: Large ribosomal subunit protein eL13 (80 aa).

It belongs to the eukaryotic ribosomal protein eL13 family.

The polypeptide is Large ribosomal subunit protein eL13 (Aeropyrum pernix (strain ATCC 700893 / DSM 11879 / JCM 9820 / NBRC 100138 / K1)).